We begin with the raw amino-acid sequence, 1251 residues long: Insulin receptor substrate 1 (1251 aa).

The residue at position 3 (Ser-3) is a Phosphoserine. A mediates interaction with PHIP region spans residues 3 to 137 (SPPESDGFSD…GAGGGGGSCS (135 aa)). A PH domain is found at 12 to 115 (DVRKVGYLRK…WYQALLQLHN (104 aa)). At Ser-99 the chain carries Phosphoserine; by CK2. Residues 160 to 264 (FKEVWQVILK…EAMRAMSDEF (105 aa)) enclose the IRS-type PTB domain. A disordered region spans residues 262-430 (DEFRPRSKSQ…SDGGFISSDE (169 aa)). Residues 269 to 281 (KSQSSSNCSNPIS) are compositionally biased toward low complexity. Position 270 is a phosphoserine (Ser-270). Position 307 is a phosphoserine; by RPS6KB1 (Ser-307). A Phosphoserine; by IKKB, MAPK8 and RPS6KB1 modification is found at Ser-312. A phosphoserine mark is found at Ser-323, Ser-330, Ser-345, and Ser-348. Positions 354-363 (THAHRHRGSA) are enriched in basic residues. Composition is skewed to low complexity over residues 383–404 (SPSA…GSTS) and 412–424 (SSAS…SDGG). At Ser-419 the chain carries Phosphoserine. A phosphothreonine mark is found at Thr-446 and Thr-453. Residue Tyr-465 is modified to Phosphotyrosine; by INSR. Positions 465–468 (YICM) match the YXXM motif 1 motif. Positions 494 to 513 (YTPGTGLGTSPALAGDEASS) are disordered. Ser-527 bears the Phosphoserine; by RPS6KB1 mark. A YXXM motif 2 motif is present at residues 551 to 554 (YTEM). A compositionally biased stretch (basic and acidic residues) spans 594–610 (RRGGHHRPDSSTLHTDD). The tract at residues 594–616 (RRGGHHRPDSSTLHTDDGYMPMS) is disordered. At Tyr-612 the chain carries Phosphotyrosine; by INSR. A YXXM motif 3 motif is present at residues 612 to 615 (YMPM). Ser-629 carries the post-translational modification Phosphoserine. Phosphotyrosine; by INSR is present on Tyr-632. Residues 632-635 (YMPM) carry the YXXM motif 4 motif. Ser-636 is modified (phosphoserine; by RPS6KB1). Position 662 is a phosphotyrosine (Tyr-662). A YXXM motif 5 motif is present at residues 662–665 (YMMM). The tract at residues 668 to 692 (SGGCSPDIGGGPSSSSSSTVPSGSS) is disordered. Residues 730–733 (YMNM) carry the YXXM motif 6 motif. Disordered stretches follow at residues 734–753 (SPVG…GPED) and 769–946 (FKHT…EETG). Residues 774 to 783 (RPGEPEEGAR) show a composition bias toward basic and acidic residues. Ser-792 is subject to Phosphoserine; by AMPK and SIK2. Composition is skewed to low complexity over residues 799–813 (AATA…SSDS) and 875–891 (QQQQ…QQQQ). Ser-901 bears the Phosphoserine mark. Residue Tyr-905 is modified to Phosphotyrosine; by INSR. Residues 905–907 (YVN) form a GRB2-binding region. The segment covering 924-937 (SRSSPSVRCPSQLQ) has biased composition (polar residues). Phosphotyrosine; by INSR is present on residues Tyr-950 and Tyr-998. 3 consecutive short sequence motifs (YXXM motif) follow at residues 950–953 (YMKM), 998–1001 (YMTM), and 1021–1024 (YADM). 2 disordered regions span residues 1091 to 1124 (NQSA…RVGN) and 1130 to 1149 (AGAA…DVKR). Residues Ser-1109 and Ser-1110 each carry the phosphoserine modification. Over residues 1111–1123 (ETFSSTPSATRVG) the composition is skewed to polar residues. Phosphotyrosine; by INSR is present on Tyr-1188. Lys-1195 participates in a covalent cross-link: Glycyl lysine isopeptide (Lys-Gly) (interchain with G-Cter in ubiquitin). Residues 1195–1251 (KDFKQRPQECTPQPQPPPPPPPHQPLGSSESSSTRRSSEDLSAYASISFQKQPEDLQ) are disordered. A compositionally biased stretch (pro residues) spans 1207–1218 (QPQPPPPPPPHQ). At Tyr-1238 the chain carries Phosphotyrosine; by INSR.

As to quaternary structure, interacts with UBTF and PIK3CA. Interacts (via phosphorylated YXXM motifs) with PIK3R1. Interacts with ROCK1 and FER. Interacts (via PH domain) with PHIP. Interacts with GRB2. Interacts with SOCS7. Interacts (via IRS-type PTB domain) with IGF1R and INSR (via the tyrosine-phosphorylated NPXY motif). Interacts with ALK. Interacts with EIF2AK2/PKR. Interacts with GKAP1. Interacts with DGKZ in the absence of insulin; insulin stimulation decreases this interaction. Found in a ternary complex with DGKZ and PIP5K1A in the absence of insulin stimulation. Interacts with SQSTM1; the interaction is disrupted by the presence of tensin TNS2. Interacts with NCK1 (via SH2 domain). Interacts with NCK2 (via SH3 domain). Interacts with SH2B1; this interaction enhances leptin-induced activation of the PI3-kinase pathway. Interacts with DVL2; this interaction promotes the Wnt/beta-catenin signaling pathway. Interacts with JAK1. Post-translationally, serine phosphorylation of IRS1 is a mechanism for insulin resistance. Ser-312 phosphorylation inhibits insulin action through disruption of IRS1 interaction with the insulin receptor. Phosphorylation of Tyr-905 is required for GRB2-binding. Phosphorylated by ALK. Phosphorylated at Ser-270, Ser-307, Ser-636 and Ser-1109 by RPS6KB1; phosphorylation induces accelerated degradation of IRS1. Phosphorylated on tyrosine residues in response to insulin. In skeletal muscles, dephosphorylated on Tyr-612 by TNS2 under anabolic conditions; dephosphorylation results in the proteasomal degradation of IRS1. Ubiquitinated by the Cul7-RING(FBXW8) complex in a mTOR-dependent manner, leading to its degradation: the Cul7-RING(FBXW8) complex recognizes and binds IRS1 previously phosphorylated by S6 kinase (RPS6KB1 or RPS6KB2). Ubiquitinated by TRAF4 through 'Lys-29' linkage; this ubiquitination regulates the interaction of IRS1 with IGFR and IRS1 tyrosine phosphorylation upon IGF1 stimulation. In terms of processing, S-nitrosylation at by BLVRB inhibits its activity.

Its subcellular location is the cytoplasm. It is found in the nucleus. Functionally, signaling adapter protein that participates in the signal transduction from two prominent receptor tyrosine kinases, insulin receptor/INSR and insulin-like growth factor I receptor/IGF1R. Plays therefore an important role in development, growth, glucose homeostasis as well as lipid metabolism. Upon phosphorylation by the insulin receptor, functions as a signaling scaffold that propagates insulin action through binding to SH2 domain-containing proteins including the p85 regulatory subunit of PI3K, NCK1, NCK2, GRB2 or SHP2. Recruitment of GRB2 leads to the activation of the guanine nucleotide exchange factor SOS1 which in turn triggers the Ras/Raf/MEK/MAPK signaling cascade. Activation of the PI3K/AKT pathway is responsible for most of insulin metabolic effects in the cell, and the Ras/Raf/MEK/MAPK is involved in the regulation of gene expression and in cooperation with the PI3K pathway regulates cell growth and differentiation. Acts a positive regulator of the Wnt/beta-catenin signaling pathway through suppression of DVL2 autophagy-mediated degradation leading to cell proliferation. The protein is Insulin receptor substrate 1 (IRS1) of Chlorocebus aethiops (Green monkey).